The sequence spans 149 residues: uncharacterized protein (149 aa).

The N-acetyltransferase domain maps to 2–146 (LEVKTISVED…NHIVMYKTLR (145 aa)).

The protein belongs to the acetyltransferase family.

This is an uncharacterized protein from Bacillus subtilis (strain 168).